We begin with the raw amino-acid sequence, 78 residues long: MSRVCQVTGKGPVTGNNISHANNKTRRRFLPNLQHHRFWVESEKRFVRLRVSAKGMRIIDKRGIDVVLAEIRRDGGKV.

The interval 1–20 (MSRVCQVTGKGPVTGNNISH) is disordered.

It belongs to the bacterial ribosomal protein bL28 family.

This chain is Large ribosomal subunit protein bL28, found in Pseudomonas fluorescens (strain ATCC BAA-477 / NRRL B-23932 / Pf-5).